Reading from the N-terminus, the 142-residue chain is HTH-type transcriptional regulator MntR (142 aa).

The 63-residue stretch at 1 to 63 (MTTPSMEDYI…YEKYRGLVLT (63 aa)) folds into the HTH dtxR-type domain. Positions 8, 11, 77, 99, 102, and 103 each coordinate Mn(2+).

The protein belongs to the DtxR/MntR family. As to quaternary structure, homodimer.

It is found in the cytoplasm. With respect to regulation, DNA binding is strongly activated by Mn(2+). Central regulator of manganese homeostasis. This chain is HTH-type transcriptional regulator MntR, found in Bacillus velezensis (strain DSM 23117 / BGSC 10A6 / LMG 26770 / FZB42) (Bacillus amyloliquefaciens subsp. plantarum).